The primary structure comprises 318 residues: Phospholipid scramblase 1 (318 aa).

Residues 1–14 (MDKQNSQMNASHPE) are compositionally biased toward polar residues. A disordered region spans residues 1–64 (MDKQNSQMNA…GPGPAGFPVP (64 aa)). Residues 1–84 (MDKQNSQMNA…NQPVGAAGVP (84 aa)) are proline-rich domain (PRD). Residues 1 to 288 (MDKQNSQMNA…IQFPLDLDVK (288 aa)) lie on the Cytoplasmic side of the membrane. An SH3-binding 1 motif is present at residues 18-26 (PVGYPPQYP). 2 short sequence motifs (PPXY motif) span residues 22-25 (PPQY) and 33-36 (PPGY). Positions 31–44 (QGPPGYSGYPGPQV) are enriched in low complexity. An SH3-binding 2 motif is present at residues 42–50 (PQVSYPPPP). Phosphotyrosine; by ABL occurs at positions 69 and 74. Residues 84–92 (PWMPAPQPP) carry the SH3-binding 3 motif. An interaction with hepatitis C virus E2 glycoprotein region spans residues 99–290 (LEYLSQIDQI…FPLDLDVKMK (192 aa)). The residue at position 161 (T161) is a Phosphothreonine; by PKC/PRKCD. 5 S-palmitoyl cysteine lipidation sites follow: C184, C185, C186, C188, and C189. The short motif at 257-266 (GKISKHWTGI) is the Nuclear localization signal element. Residues 289-305 (MKAVMIGACFLIDFMFF) form a helical membrane-spanning segment. The Extracellular segment spans residues 306 to 318 (ESTGSQEQKSGVW).

It belongs to the phospholipid scramblase family. As to quaternary structure, forms homooligomers in the presence of calcium. Interacts with ABL. Interacts with RELT, RELL1 and RELL2. Interacts with OXSR1 in the presence of RELT. Interacts with TOP2A and TOP2B. Interacts with OCLN. Interacts with TRPC5. Interacts with TRPC1 and TRPC4. Interacts with ILDR1. (Microbial infection) Interacts with hepatitis C virus E1 and E2 glycoproteins. In terms of assembly, (Microbial infection) Interacts with T-cell leukemia virus (HTLV)-1 protein Tax (via N-terminus); this interaction represses Tax homodimerization. As to quaternary structure, (Microbial infection) Interacts with HIV-1 protein Tat; this interaction represses the Tat-dependent transactivation of the HIV-1 long terminal repeat (LTR) and reduces the nuclear translocation of Tat. (Microbial infection) Interacts with hepatitis B virus protein HBx; this interaction promotes the proteasomal degradation of HBx. In terms of assembly, (Microbial infection) Interacts with human cytomegalovirus proteins IE1 and IE2. As to quaternary structure, (Microbial infection) Interacts with Epstein Barr virus (EBV) lytic switch protein BZLF1; this interaction negatively regulates the transcriptional regulatory activity of BZLF1 by preventing the formation of the BZLF1-CBP complex. (Microbial infection) Interacts with influenza virus nucleoprotein NP. Ca(2+) is required as a cofactor. The cofactor is Mg(2+). Requires Zn(2+) as cofactor. Phosphorylation at Thr-161 by PKC/PKCD increases its phospholipid scramblase activity during both cell stimulation and apoptosis. Phosphorylated by OXSR1 in the presence of RELT. Post-translationally, palmitoylation is required for its phospholipid scramblase activity. Palmitoylation regulates its localization to the cell membrane or the nucleus; trafficking to the cell membrane is dependent upon palmitoylation whereas in the absence of palmitoylation, localizes to the nucleus. As to expression, expressed in platelets, erythrocyte membranes, lymphocytes, spleen, thymus, prostate, testis, uterus, intestine, colon, heart, placenta, lung, liver, kidney and pancreas. Not detected in brain and skeletal muscle.

The protein localises to the cell membrane. Its subcellular location is the nucleus. It is found in the cytoplasm. It localises to the perinuclear region. It catalyses the reaction a 1,2-diacyl-sn-glycero-3-phosphocholine(in) = a 1,2-diacyl-sn-glycero-3-phosphocholine(out). It carries out the reaction a 1,2-diacyl-sn-glycero-3-phosphoethanolamine(in) = a 1,2-diacyl-sn-glycero-3-phosphoethanolamine(out). The catalysed reaction is a 1,2-diacyl-sn-glycero-3-phospho-L-serine(in) = a 1,2-diacyl-sn-glycero-3-phospho-L-serine(out). Its activity is regulated as follows. Activated by Pb(2+) and Hg(2+) ions. Phosphorylation at Thr-161 by PKC/PKCD increases its phospholipid scramblase activity during both cell stimulation and apoptosis. Its function is as follows. Catalyzes calcium-induced ATP-independent rapid bidirectional and non-specific movement of phospholipids (lipid scrambling or lipid flip-flop) between the inner and outer leaflet of the plasma membrane resulting in collapse of the phospholipid asymmetry which leads to phosphatidylserine externalization on the cell surface. Mediates calcium-dependent phosphatidylserine externalization and apoptosis in neurons via its association with TRPC5. Also exhibits magnesium-dependent nuclease activity against double-stranded DNA and RNA but not single-stranded DNA and can enhance DNA decatenation mediated by TOP2A. Negatively regulates FcR-mediated phagocytosis in differentiated macrophages. May contribute to cytokine-regulated cell proliferation and differentiation. May play a role in the antiviral response of interferon (IFN) by amplifying and enhancing the IFN response through increased expression of select subset of potent antiviral genes. Inhibits the functions of viral transactivators, including human T-cell leukemia virus (HTLV)-1 protein Tax, human immunodeficiency virus (HIV)-1 Tat, human hepatitis B virus (HBV) HBx, Epstein-Barr virus (EBV) BZLF1 and human cytomegalovirus IE1 and IE2 proteins through direct interactions. Also mediates the inhibition of influenza virus infection by preventing nuclear import of the viral nucleoprotein/NP. Plays a crucial role as a defense factor against SARS-CoV-2 independently of its scramblase activity by directly targeting nascent viral vesicles to prevent virus-membrane fusion and the release of viral RNA into the host-cell cytosol. In terms of biological role, (Microbial infection) Acts as an attachment receptor for HCV. This Homo sapiens (Human) protein is Phospholipid scramblase 1 (PLSCR1).